Consider the following 587-residue polypeptide: Aspartate--tRNA ligase (587 aa).

Glu175 is an L-aspartate binding site. Positions 199-202 (QQFK) are aspartate. L-aspartate is bound by residues Arg221 and His446. Residue 221 to 223 (RDE) participates in ATP binding. Glu480 lines the ATP pocket. Arg487 is an L-aspartate binding site. 532 to 535 (GVDR) lines the ATP pocket.

The protein belongs to the class-II aminoacyl-tRNA synthetase family. Type 1 subfamily. Homodimer.

It is found in the cytoplasm. It carries out the reaction tRNA(Asp) + L-aspartate + ATP = L-aspartyl-tRNA(Asp) + AMP + diphosphate. Catalyzes the attachment of L-aspartate to tRNA(Asp) in a two-step reaction: L-aspartate is first activated by ATP to form Asp-AMP and then transferred to the acceptor end of tRNA(Asp). The polypeptide is Aspartate--tRNA ligase (Streptomyces avermitilis (strain ATCC 31267 / DSM 46492 / JCM 5070 / NBRC 14893 / NCIMB 12804 / NRRL 8165 / MA-4680)).